Consider the following 141-residue polypeptide: UPF0225 protein Rmet_0111 (141 aa).

The protein belongs to the UPF0225 family.

This Cupriavidus metallidurans (strain ATCC 43123 / DSM 2839 / NBRC 102507 / CH34) (Ralstonia metallidurans) protein is UPF0225 protein Rmet_0111.